Here is a 426-residue protein sequence, read N- to C-terminus: Glucose-6-phosphate isomerase (426 aa).

Glu-282 serves as the catalytic Proton donor. Catalysis depends on residues His-303 and Lys-419.

The protein belongs to the GPI family.

The protein localises to the cytoplasm. It carries out the reaction alpha-D-glucose 6-phosphate = beta-D-fructose 6-phosphate. The protein operates within carbohydrate biosynthesis; gluconeogenesis. Its pathway is carbohydrate degradation; glycolysis; D-glyceraldehyde 3-phosphate and glycerone phosphate from D-glucose: step 2/4. In terms of biological role, catalyzes the reversible isomerization of glucose-6-phosphate to fructose-6-phosphate. This is Glucose-6-phosphate isomerase from Mycoplasmoides gallisepticum (strain R(low / passage 15 / clone 2)) (Mycoplasma gallisepticum).